The primary structure comprises 228 residues: Probable septum site-determining protein MinC (228 aa).

Belongs to the MinC family. Interacts with MinD and FtsZ.

Functionally, cell division inhibitor that blocks the formation of polar Z ring septums. Rapidly oscillates between the poles of the cell to destabilize FtsZ filaments that have formed before they mature into polar Z rings. Prevents FtsZ polymerization. The polypeptide is Probable septum site-determining protein MinC (Bacillus cereus (strain B4264)).